The chain runs to 145 residues: Antimicrobial peptide NK-lysin (145 aa).

An N-terminal signal peptide occupies residues 1-22 (MTSRALLLLASALLGTPGLTFS). Residues 23–62 (GLNPESYDLATAHLSDGEQFCQGLTQEDLQGDLLTERERQ) constitute a propeptide that is removed on maturation. The Saposin B-type domain occupies 62–142 (QGIACWSCRK…VDIKLCKHKA (81 aa)). 3 cysteine pairs are disulfide-bonded: Cys-66–Cys-138, Cys-69–Cys-132, and Cys-97–Cys-107. Residues 141-145 (KAGLI) constitute a propeptide that is removed on maturation.

The protein localises to the secreted. In terms of biological role, may be an effector molecule of cytotoxic activity. Has antimicrobial activity. This is Antimicrobial peptide NK-lysin (NKL) from Equus caballus (Horse).